Reading from the N-terminus, the 190-residue chain is Xanthine phosphoribosyltransferase (190 aa).

Residues L20 and N27 each contribute to the xanthine site. 128–132 is a binding site for 5-phospho-alpha-D-ribose 1-diphosphate; it reads ANGHA. K156 is a xanthine binding site.

The protein belongs to the purine/pyrimidine phosphoribosyltransferase family. Xpt subfamily. Homodimer.

It is found in the cytoplasm. It carries out the reaction XMP + diphosphate = xanthine + 5-phospho-alpha-D-ribose 1-diphosphate. The protein operates within purine metabolism; XMP biosynthesis via salvage pathway; XMP from xanthine: step 1/1. Its function is as follows. Converts the preformed base xanthine, a product of nucleic acid breakdown, to xanthosine 5'-monophosphate (XMP), so it can be reused for RNA or DNA synthesis. The chain is Xanthine phosphoribosyltransferase from Pseudomonas aeruginosa (strain ATCC 15692 / DSM 22644 / CIP 104116 / JCM 14847 / LMG 12228 / 1C / PRS 101 / PAO1).